Consider the following 441-residue polypeptide: MREIISLHIGQAGVQIGNACWELYCKEHGILPNGQLDQNKMDDESAESFFSPTSVGTYVPRTLMVDLEPGVLDSIKTGKYRELYHPGQLISGKEDAANNYARGHYTVGKEIIEPAMEQIRRMADSCDGLQGFLIYHSFGGGTGSGFASLMMDRLAAEFGKKSKLEFSVYPAPKIATAVVEPYNSILTTHTTLDYSDCSFLVDNEAIYDMCRNLGIQRPYYTDINRVIAQVVSSITASLRFPGSLNVDLTEFQTNLVPYPRIHFPLVAYSPMLSKEKAAHEKLSVQEITNACFEPQNQMVRCDTRKGKYMACCLLFRGDVNPKEANNATANVKAKRTNQFVEWCPTGFKVGINSRKPTVLDGEAMAEVSRAVCALSNTTAISEAWKRLNNKFDLMFSKRAFVHWYVGEGMEEGEFSEAREDLAMLEDDYERISSNAEPVDEY.

Positions 11, 68, 137, 141, 142, 176, 203, and 224 each coordinate GTP. Glu68 is a binding site for Mg(2+). The active site involves Glu250.

This sequence belongs to the tubulin family. As to quaternary structure, dimer of alpha and beta chains. A typical microtubule is a hollow water-filled tube with an outer diameter of 25 nm and an inner diameter of 15 nM. Alpha-beta heterodimers associate head-to-tail to form protofilaments running lengthwise along the microtubule wall with the beta-tubulin subunit facing the microtubule plus end conferring a structural polarity. Microtubules usually have 13 protofilaments but different protofilament numbers can be found in some organisms and specialized cells. Mg(2+) is required as a cofactor.

Its subcellular location is the cytoplasm. The protein localises to the cytoskeleton. The enzyme catalyses GTP + H2O = GDP + phosphate + H(+). In terms of biological role, tubulin is the major constituent of microtubules, a cylinder consisting of laterally associated linear protofilaments composed of alpha- and beta-tubulin heterodimers. Microtubules grow by the addition of GTP-tubulin dimers to the microtubule end, where a stabilizing cap forms. Below the cap, tubulin dimers are in GDP-bound state, owing to GTPase activity of alpha-tubulin. The polypeptide is Tubulin alpha chain (TUB1) (Encephalitozoon cuniculi (strain GB-M1) (Microsporidian parasite)).